A 577-amino-acid chain; its full sequence is 2-succinyl-5-enolpyruvyl-6-hydroxy-3-cyclohexene-1-carboxylate synthase (577 aa).

Belongs to the TPP enzyme family. MenD subfamily. In terms of assembly, homodimer. Mg(2+) serves as cofactor. It depends on Mn(2+) as a cofactor. Thiamine diphosphate is required as a cofactor.

It catalyses the reaction isochorismate + 2-oxoglutarate + H(+) = 5-enolpyruvoyl-6-hydroxy-2-succinyl-cyclohex-3-ene-1-carboxylate + CO2. It participates in quinol/quinone metabolism; 1,4-dihydroxy-2-naphthoate biosynthesis; 1,4-dihydroxy-2-naphthoate from chorismate: step 2/7. It functions in the pathway quinol/quinone metabolism; menaquinone biosynthesis. Catalyzes the thiamine diphosphate-dependent decarboxylation of 2-oxoglutarate and the subsequent addition of the resulting succinic semialdehyde-thiamine pyrophosphate anion to isochorismate to yield 2-succinyl-5-enolpyruvyl-6-hydroxy-3-cyclohexene-1-carboxylate (SEPHCHC). In Christiangramia forsetii (strain DSM 17595 / CGMCC 1.15422 / KT0803) (Gramella forsetii), this protein is 2-succinyl-5-enolpyruvyl-6-hydroxy-3-cyclohexene-1-carboxylate synthase.